The primary structure comprises 305 residues: Dermonecrotic toxin LiSicTox-betaID1 (305 aa).

The first 18 residues, 1–18, serve as a signal peptide directing secretion; sequence MQLFIILCLAGSAVQLEG. The propeptide occupies 19–26; that stretch reads TELDGVER. Histidine 38 is a catalytic residue. Positions 58 and 60 each coordinate Mg(2+). Histidine 74 acts as the Nucleophile in catalysis. 2 cysteine pairs are disulfide-bonded: cysteine 78–cysteine 84 and cysteine 80–cysteine 223. Mg(2+) is bound at residue aspartate 118.

It belongs to the arthropod phospholipase D family. Class II subfamily. Class IIb sub-subfamily. Mg(2+) serves as cofactor. In terms of tissue distribution, expressed by the venom gland.

Its subcellular location is the secreted. It catalyses the reaction an N-(acyl)-sphingosylphosphocholine = an N-(acyl)-sphingosyl-1,3-cyclic phosphate + choline. The catalysed reaction is an N-(acyl)-sphingosylphosphoethanolamine = an N-(acyl)-sphingosyl-1,3-cyclic phosphate + ethanolamine. The enzyme catalyses a 1-acyl-sn-glycero-3-phosphocholine = a 1-acyl-sn-glycero-2,3-cyclic phosphate + choline. It carries out the reaction a 1-acyl-sn-glycero-3-phosphoethanolamine = a 1-acyl-sn-glycero-2,3-cyclic phosphate + ethanolamine. In terms of biological role, dermonecrotic toxins cleave the phosphodiester linkage between the phosphate and headgroup of certain phospholipids (sphingolipid and lysolipid substrates), forming an alcohol (often choline) and a cyclic phosphate. This toxin acts on sphingomyelin (SM) with low activity. It may also act on ceramide phosphoethanolamine (CPE), lysophosphatidylcholine (LPC) and lysophosphatidylethanolamine (LPE), but not on lysophosphatidylserine (LPS), and lysophosphatidylglycerol (LPG). It acts by transphosphatidylation, releasing exclusively cyclic phosphate products as second products. Has no or weak activities in inducing dermonecrosis, hemolysis, inflammatory response, platelet aggregation and increase in vessel permeability. In vivo, shows no lethality when injected at higher dose into mice. This Loxosceles intermedia (Brown spider) protein is Dermonecrotic toxin LiSicTox-betaID1.